The chain runs to 351 residues: Phosphoribosylformylglycinamidine cyclo-ligase (351 aa).

The protein belongs to the AIR synthase family.

Its subcellular location is the cytoplasm. The catalysed reaction is 2-formamido-N(1)-(5-O-phospho-beta-D-ribosyl)acetamidine + ATP = 5-amino-1-(5-phospho-beta-D-ribosyl)imidazole + ADP + phosphate + H(+). Its pathway is purine metabolism; IMP biosynthesis via de novo pathway; 5-amino-1-(5-phospho-D-ribosyl)imidazole from N(2)-formyl-N(1)-(5-phospho-D-ribosyl)glycinamide: step 2/2. This Burkholderia pseudomallei (strain 1710b) protein is Phosphoribosylformylglycinamidine cyclo-ligase.